The chain runs to 832 residues: G-type lectin S-receptor-like serine/threonine-protein kinase RLK1 (832 aa).

Positions 1-24 (MGSLSCSIIHLVLILQLQTFFVFS) are cleaved as a signal peptide. Residues 25-461 (QNIRNGSVPV…VPVTGNRAKK (437 aa)) lie on the Extracellular side of the membrane. Residues Asn29, Asn92, Asn100, Asn178, Asn240, and Asn251 are each glycosylated (N-linked (GlcNAc...) asparagine). The 121-residue stretch at 37–157 (SLTASESQQI…GSEDSDEVLW (121 aa)) folds into the Bulb-type lectin domain. Positions 299–349 (RDNMCSPDDALGNMACGYNNICSLGNNKRPKCECPERFVLKDPSNEYGDCL) constitute an EGF-like; atypical domain. Disulfide bonds link Cys303–Cys320, Cys314–Cys330, and Cys332–Cys348. Residues 357 to 446 (CRPENQTANS…DSDTFIKVRN (90 aa)) enclose the PAN domain. N-linked (GlcNAc...) asparagine glycosylation is present at Asn361. Disulfide bonds link Cys397–Cys420 and Cys401–Cys407. A glycan (N-linked (GlcNAc...) asparagine) is linked at Asn446. Residues 462 to 482 (LDWLIIACSVLLGTSAFVIFD) traverse the membrane as a helical segment. Topologically, residues 483–832 (TSCSYRKTKK…SLSSDPVSLV (350 aa)) are cytoplasmic. A Protein kinase domain is found at 531–803 (RDFTEELGRG…NVTQMLEGVI (273 aa)). ATP contacts are provided by residues 537-545 (LGRGAFGIV) and Lys563. The tract at residues 622-638 (RRPRPSWEDRKNIAVAI) is caM-binding. Residue Asp657 is the Proton acceptor of the active site.

Belongs to the protein kinase superfamily. Ser/Thr protein kinase family.

The protein resides in the cell membrane. The catalysed reaction is L-seryl-[protein] + ATP = O-phospho-L-seryl-[protein] + ADP + H(+). The enzyme catalyses L-threonyl-[protein] + ATP = O-phospho-L-threonyl-[protein] + ADP + H(+). The sequence is that of G-type lectin S-receptor-like serine/threonine-protein kinase RLK1 (RLK1) from Arabidopsis thaliana (Mouse-ear cress).